A 524-amino-acid polypeptide reads, in one-letter code: Maltose/maltodextrin transport system permease protein MalF (524 aa).

The Cytoplasmic portion of the chain corresponds to 1 to 22; sequence MQSVQGTQAMSDPTAVRPADKR. The chain crosses the membrane as a helical span at residues 23–45; sequence AFLKWAVLGAVGIVNGYATILMY. Topologically, residues 46–49 are periplasmic; that stretch reads SRGE. A helical transmembrane segment spans residues 50 to 69; that stretch reads VAFALLTLILTTLALYIFGS. The Cytoplasmic portion of the chain corresponds to 70-81; it reads RKTYAHRYIYPG. Residues 82–104 form a helical membrane-spanning segment; sequence IAGMILFILFPLAYTVGLAFTNY. The Periplasmic segment spans residues 105–289; it reads SAKNQLTLER…DEGIKEPFIN (185 aa). A helical transmembrane segment spans residues 290 to 312; the sequence is IFIWTVIFSVLTVIFTLMIGLVL. Residues 291 to 515 enclose the ABC transmembrane type-1 domain; the sequence is FIWTVIFSVL…LLVGALALLN (225 aa). Over 313–324 the chain is Cytoplasmic; sequence ASVVQWEALKGR. A helical membrane pass occupies residues 325–347; it reads AVYRVLLILPYAVPAFISILIFR. Residues 348-379 lie on the Periplasmic side of the membrane; that stretch reads GLFNQSFGEINMVLNGLFGLSPAWFSDPLLAK. The chain crosses the membrane as a helical span at residues 380-402; it reads TMVLIVNTWLGFPYMMIFCMGLL. At 403–435 the chain is on the cytoplasmic side; the sequence is KAIPDDLYEASAIDGANFIHNFTKITLPMMIKP. Residues 436–458 traverse the membrane as a helical segment; that stretch reads LTPLLIASFAFNFNNFVMIQLLT. The Periplasmic portion of the chain corresponds to 459 to 493; the sequence is QGGPNRIGTSEPAGYTDLLVSYTYRIAFEGTGGQD. Residues 494-516 traverse the membrane as a helical segment; it reads FGLASAIATLIFLLVGALALLNL. At 517–524 the chain is on the cytoplasmic side; it reads RFTKLSQQ.

Belongs to the binding-protein-dependent transport system permease family. MalFG subfamily. In terms of assembly, the complex is composed of two ATP-binding proteins (MalK), two transmembrane proteins (MalG and MalF) and a solute-binding protein (MalE).

It is found in the cell inner membrane. Functionally, part of the ABC transporter complex MalEFGK involved in maltose/maltodextrin import. Probably responsible for the translocation of the substrate across the membrane. The chain is Maltose/maltodextrin transport system permease protein MalF (malF) from Vibrio cholerae serotype O1 (strain ATCC 39315 / El Tor Inaba N16961).